Reading from the N-terminus, the 282-residue chain is MVIFKTVNDVRSQVKEWKKQGLKVGLVPTMGYLHEGHESLIRKASKENDKVVVSIFVNPTQFGKNEDLGSYPRDLERDIEVCTRGRATAIFNPEVEEMYCDNASTFVNITGLTEGLCGASRPIHFRGVCTVVSKLFNIIPADRAYFGEKDAQQLAVIKRMVRDLNIDIDVVGCPIIREEDGLAKSSRNTYLSLEERSSATILNKSLTLAKEALNNGERDSLKIIEIISKNINTCNLAKIDYVEVVDSLSLQRVNYIEKSVLVAIAVFIGKTRLIDNFTFELQ.

Position 30–37 (30–37) interacts with ATP; the sequence is MGYLHEGH. Catalysis depends on His-37, which acts as the Proton donor. Gln-61 lines the (R)-pantoate pocket. Gln-61 provides a ligand contact to beta-alanine. 147-150 contributes to the ATP binding site; it reads GEKD. Position 153 (Gln-153) interacts with (R)-pantoate. ATP is bound by residues Ile-176 and 184 to 187; that span reads KSSR.

It belongs to the pantothenate synthetase family. In terms of assembly, homodimer.

The protein resides in the cytoplasm. The enzyme catalyses (R)-pantoate + beta-alanine + ATP = (R)-pantothenate + AMP + diphosphate + H(+). It functions in the pathway cofactor biosynthesis; (R)-pantothenate biosynthesis; (R)-pantothenate from (R)-pantoate and beta-alanine: step 1/1. In terms of biological role, catalyzes the condensation of pantoate with beta-alanine in an ATP-dependent reaction via a pantoyl-adenylate intermediate. The polypeptide is Pantothenate synthetase (Enterococcus faecalis (strain ATCC 700802 / V583)).